Reading from the N-terminus, the 252-residue chain is Cell division protein ZapD (252 aa).

Belongs to the ZapD family. As to quaternary structure, interacts with FtsZ.

The protein resides in the cytoplasm. Its function is as follows. Cell division factor that enhances FtsZ-ring assembly. Directly interacts with FtsZ and promotes bundling of FtsZ protofilaments, with a reduction in FtsZ GTPase activity. The protein is Cell division protein ZapD of Ralstonia nicotianae (strain ATCC BAA-1114 / GMI1000) (Ralstonia solanacearum).